Reading from the N-terminus, the 1202-residue chain is DNA polymerase beta (1202 aa).

Repeat copies occupy residues A1071 to P1074, A1075 to P1078, and A1079 to A1082. A 3 X 4 AA tandem repeats of A-G-[NK]-[PA] region spans residues A1071 to A1082.

This sequence belongs to the DNA polymerase type-B family.

The catalysed reaction is DNA(n) + a 2'-deoxyribonucleoside 5'-triphosphate = DNA(n+1) + diphosphate. DNA-directed DNA polymerase involved in viral DNA replication. The sequence is that of DNA polymerase beta (DPOL) from Ornithodoros (relapsing fever ticks).